We begin with the raw amino-acid sequence, 408 residues long: tRNA-specific 2-thiouridylase MnmA (408 aa).

Residues 27-34 (AMSGGVDS) and Leu53 contribute to the ATP site. Cys121 acts as the Nucleophile in catalysis. The cysteines at positions 121 and 222 are disulfide-linked. Gly145 serves as a coordination point for ATP. The interaction with tRNA stretch occupies residues 172–174 (RDQ). The active-site Cysteine persulfide intermediate is Cys222.

The protein belongs to the MnmA/TRMU family.

The protein resides in the cytoplasm. The catalysed reaction is S-sulfanyl-L-cysteinyl-[protein] + uridine(34) in tRNA + AH2 + ATP = 2-thiouridine(34) in tRNA + L-cysteinyl-[protein] + A + AMP + diphosphate + H(+). Its function is as follows. Catalyzes the 2-thiolation of uridine at the wobble position (U34) of tRNA, leading to the formation of s(2)U34. This Rhizobium johnstonii (strain DSM 114642 / LMG 32736 / 3841) (Rhizobium leguminosarum bv. viciae) protein is tRNA-specific 2-thiouridylase MnmA.